The chain runs to 466 residues: Soluble pyridine nucleotide transhydrogenase (466 aa).

36–45 provides a ligand contact to FAD; it reads ERYQNVGGGC.

It belongs to the class-I pyridine nucleotide-disulfide oxidoreductase family. FAD serves as cofactor.

The protein resides in the cytoplasm. The enzyme catalyses NAD(+) + NADPH = NADH + NADP(+). Functionally, conversion of NADPH, generated by peripheral catabolic pathways, to NADH, which can enter the respiratory chain for energy generation. In Escherichia coli O81 (strain ED1a), this protein is Soluble pyridine nucleotide transhydrogenase.